Reading from the N-terminus, the 213-residue chain is UPF0329 protein ECU04_0110 (213 aa).

It belongs to the UPF0329 family.

This chain is UPF0329 protein ECU04_0110, found in Encephalitozoon cuniculi (strain GB-M1) (Microsporidian parasite).